Consider the following 574-residue polypeptide: Urease subunit alpha (574 aa).

Residues 131-574 (GAIDSHIHFI…LPMAQRYLLL (444 aa)) enclose the Urease domain. Residues His136, His138, and Lys219 each coordinate Ni(2+). Lys219 is subject to N6-carboxylysine. His221 contributes to the substrate binding site. His248 and His274 together coordinate Ni(2+). His322 (proton donor) is an active-site residue. Asp362 serves as a coordination point for Ni(2+). The disordered stretch occupies residues 384–403 (KVQRGPLPEDAANPRGSRND).

Belongs to the metallo-dependent hydrolases superfamily. Urease alpha subunit family. As to quaternary structure, heterotrimer of UreA (gamma), UreB (beta) and UreC (alpha) subunits. Three heterotrimers associate to form the active enzyme. Ni cation serves as cofactor. Carboxylation allows a single lysine to coordinate two nickel ions.

Its subcellular location is the cytoplasm. The enzyme catalyses urea + 2 H2O + H(+) = hydrogencarbonate + 2 NH4(+). It functions in the pathway nitrogen metabolism; urea degradation; CO(2) and NH(3) from urea (urease route): step 1/1. This chain is Urease subunit alpha, found in Prochlorococcus marinus (strain MIT 9313).